The primary structure comprises 348 residues: Benzoate 1,2-dioxygenase electron transfer component (348 aa).

The region spanning 14-109 (HQVALQFEDG…DAVFQIQASS (96 aa)) is the 2Fe-2S ferredoxin-type domain. The [2Fe-2S] cluster site is built by Cys51, Cys56, Cys59, and Cys93. Residues 111–348 (VCKTKIHHFE…NFLFEKFSAN (238 aa)) form a ferredoxin-reductase region. An FAD-binding FR-type domain is found at 116-217 (IHHFEGTLAR…TGPFGSFYLR (102 aa)).

Belongs to the bacterial ring-hydroxylating dioxygenase ferredoxin reductase family. In terms of assembly, this dioxygenase system consists of three proteins: the two subunits of the hydroxylase component (BenA and BenB), and an electron transfer component (BenC). FAD serves as cofactor. It depends on [2Fe-2S] cluster as a cofactor.

It carries out the reaction 2 reduced [2Fe-2S]-[ferredoxin] + NAD(+) + H(+) = 2 oxidized [2Fe-2S]-[ferredoxin] + NADH. It participates in xenobiotic degradation; toluene degradation. Its function is as follows. Electron transfer component of benzoate 1,2-dioxygenase system. The sequence is that of Benzoate 1,2-dioxygenase electron transfer component (benC) from Acinetobacter baylyi (strain ATCC 33305 / BD413 / ADP1).